The primary structure comprises 221 residues: Urease accessory protein UreE (221 aa).

The tract at residues valine 160 to lysine 194 is disordered. The segment covering threonine 177–lysine 194 has biased composition (basic and acidic residues).

This sequence belongs to the UreE family.

It is found in the cytoplasm. In terms of biological role, involved in urease metallocenter assembly. Binds nickel. Probably functions as a nickel donor during metallocenter assembly. This is Urease accessory protein UreE from Bifidobacterium longum subsp. infantis (strain ATCC 15697 / DSM 20088 / JCM 1222 / NCTC 11817 / S12).